The primary structure comprises 209 residues: MKTSEWIDISQPLNNNIATWPGDTPFSYEVSWSKEESGSVNVGKLTMSIHTGTHIDAPFHFDNDGKKVLDLDVQVYVGPARIIDVSNLESIGKKELESFHLEGVERLLLRTSSHGKAEEFPEVIPHLRADIASFLSEKGIRLIGVDVPSVDPLDDKELAAHHQLFKHGIHILENVVLDHVADGDYELIALPLALTDADGSPVRAVIRPI.

Trp-20 is a substrate binding site. Residues His-50, His-54, and Asp-56 each contribute to the Zn(2+) site. His-60 acts as the Proton donor/acceptor in catalysis. Zn(2+)-binding residues include His-161 and Glu-173.

This sequence belongs to the Cyclase 1 superfamily. KynB family. As to quaternary structure, homodimer. Zn(2+) serves as cofactor.

The catalysed reaction is N-formyl-L-kynurenine + H2O = L-kynurenine + formate + H(+). It functions in the pathway amino-acid degradation; L-tryptophan degradation via kynurenine pathway; L-kynurenine from L-tryptophan: step 2/2. In terms of biological role, catalyzes the hydrolysis of N-formyl-L-kynurenine to L-kynurenine, the second step in the kynurenine pathway of tryptophan degradation. In Bacillus cereus (strain ATCC 14579 / DSM 31 / CCUG 7414 / JCM 2152 / NBRC 15305 / NCIMB 9373 / NCTC 2599 / NRRL B-3711), this protein is Kynurenine formamidase.